Consider the following 188-residue polypeptide: Methylated-DNA--protein-cysteine methyltransferase (188 aa).

Y120, G121, and R134 together coordinate DNA. C151 serves as the catalytic Nucleophile; methyl group acceptor. Residue S157 participates in DNA binding.

Belongs to the MGMT family.

The protein resides in the nucleus. It catalyses the reaction a 6-O-methyl-2'-deoxyguanosine in DNA + L-cysteinyl-[protein] = S-methyl-L-cysteinyl-[protein] + a 2'-deoxyguanosine in DNA. The catalysed reaction is a 4-O-methyl-thymidine in DNA + L-cysteinyl-[protein] = a thymidine in DNA + S-methyl-L-cysteinyl-[protein]. Its function is as follows. Involved in the cellular defense against the biological effects of O6-methylguanine (O6-MeG) and O4-methylthymine (O4-MeT) in DNA. Repairs the methylated nucleobase in DNA by stoichiometrically transferring the methyl group to a cysteine residue in the enzyme. This is a suicide reaction: the enzyme is irreversibly inactivated. Prefers double-stranded DNA over single-stranded DNA as substrate. This is Methylated-DNA--protein-cysteine methyltransferase (MGT1) from Saccharomyces cerevisiae (strain ATCC 204508 / S288c) (Baker's yeast).